A 279-amino-acid chain; its full sequence is Shikimate dehydrogenase (NADP(+)) (279 aa).

Residues 20 to 22 and Thr-67 contribute to the shikimate site; that span reads SRS. Lys-71 (proton acceptor) is an active-site residue. Asp-83 lines the NADP(+) pocket. The shikimate site is built by Asn-92 and Asp-108. NADP(+) is bound by residues 134–138 and Leu-223; that span reads GAGGA. Tyr-225 lines the shikimate pocket. An NADP(+)-binding site is contributed by Gly-246.

This sequence belongs to the shikimate dehydrogenase family. As to quaternary structure, homodimer.

The catalysed reaction is shikimate + NADP(+) = 3-dehydroshikimate + NADPH + H(+). The protein operates within metabolic intermediate biosynthesis; chorismate biosynthesis; chorismate from D-erythrose 4-phosphate and phosphoenolpyruvate: step 4/7. Functionally, involved in the biosynthesis of the chorismate, which leads to the biosynthesis of aromatic amino acids. Catalyzes the reversible NADPH linked reduction of 3-dehydroshikimate (DHSA) to yield shikimate (SA). The polypeptide is Shikimate dehydrogenase (NADP(+)) (Cereibacter sphaeroides (strain ATCC 17023 / DSM 158 / JCM 6121 / CCUG 31486 / LMG 2827 / NBRC 12203 / NCIMB 8253 / ATH 2.4.1.) (Rhodobacter sphaeroides)).